Reading from the N-terminus, the 424-residue chain is CinA-like protein (424 aa).

This sequence belongs to the CinA family.

The polypeptide is CinA-like protein (Prochlorococcus marinus (strain MIT 9312)).